A 167-amino-acid polypeptide reads, in one-letter code: NAD(P)H-quinone oxidoreductase subunit I, chloroplastic (167 aa).

4Fe-4S ferredoxin-type domains follow at residues 55 to 84 (GRIH…VDWK) and 95 to 124 (LNYS…MTEE). Residues Cys-64, Cys-67, Cys-70, Cys-74, Cys-104, Cys-107, Cys-110, and Cys-114 each contribute to the [4Fe-4S] cluster site.

The protein belongs to the complex I 23 kDa subunit family. In terms of assembly, NDH is composed of at least 16 different subunits, 5 of which are encoded in the nucleus. [4Fe-4S] cluster serves as cofactor.

The protein resides in the plastid. The protein localises to the chloroplast thylakoid membrane. The catalysed reaction is a plastoquinone + NADH + (n+1) H(+)(in) = a plastoquinol + NAD(+) + n H(+)(out). The enzyme catalyses a plastoquinone + NADPH + (n+1) H(+)(in) = a plastoquinol + NADP(+) + n H(+)(out). Its function is as follows. NDH shuttles electrons from NAD(P)H:plastoquinone, via FMN and iron-sulfur (Fe-S) centers, to quinones in the photosynthetic chain and possibly in a chloroplast respiratory chain. The immediate electron acceptor for the enzyme in this species is believed to be plastoquinone. Couples the redox reaction to proton translocation, and thus conserves the redox energy in a proton gradient. In Gossypium barbadense (Sea Island cotton), this protein is NAD(P)H-quinone oxidoreductase subunit I, chloroplastic.